A 562-amino-acid chain; its full sequence is Probable ganciclovir kinase (562 aa).

Residues 1–16 are compositionally biased toward polar residues; it reads MDNGVETPQGQKTQPI. The disordered stretch occupies residues 1-32; the sequence is MDNGVETPQGQKTQPINLPPVRKKLRKHEGLG. ATP is bound by residues 201-209 and K218; that span reads LGVGAYGKV. The active-site Proton acceptor is the D313.

It belongs to the protein kinase superfamily. Tyr protein kinase family. HCMV ganciclovir subfamily.

Functionally, phosphorylates the antiviral nucleoside analog ganciclovir. The sequence is that of Probable ganciclovir kinase (U69) from Homo sapiens (Human).